We begin with the raw amino-acid sequence, 319 residues long: HTH-type transcriptional regulator YidZ (319 aa).

Residues 8–65 enclose the HTH lysR-type domain; that stretch reads LDLNLLLCLQLLMQERSVTKAAKRMNVTPSAVSKSLAKLRAWFDDPLFVNSPLGLSPT. The segment at residues 25–44 is a DNA-binding region (H-T-H motif); it reads VTKAAKRMNVTPSAVSKSLA.

This sequence belongs to the LysR transcriptional regulatory family.

Involved in anaerobic NO protection. The protein is HTH-type transcriptional regulator YidZ of Escherichia coli O139:H28 (strain E24377A / ETEC).